The following is a 152-amino-acid chain: Succinate dehydrogenase [ubiquinone] cytochrome b small subunit B, mitochondrial (152 aa).

A mitochondrion-targeting transit peptide spans 1–21 (MATLLRVSSLCRANRASAFKS). The Mitochondrial matrix portion of the chain corresponds to 22–56 (LLIRPLPCLSQDLHMVQTSQIHTSPNHHAGSKAAS). A helical transmembrane segment spans residues 57-78 (MHWTGERALSVALLGLLPAAYL). Over 79–83 (YPGAA) the chain is Mitochondrial intermembrane. Residues 84–104 (MDYSLAAALTLHGHWGLGQVV) traverse the membrane as a helical segment. A heme b-binding site is contributed by H95. Residues 105–113 (TDYVHGETK) lie on the Mitochondrial matrix side of the membrane. Residue Y107 participates in a ubiquinone binding. Residues 114–135 (IKMANTSLFALSALTFAGLCYF) form a helical membrane-spanning segment. Topologically, residues 136 to 152 (NYHDVGICKAVAMLWSL) are mitochondrial intermembrane.

The protein belongs to the CybS family. Component of complex II composed of four subunits: the flavoprotein (FP) SDHA, iron-sulfur protein (IP) SDHB, and a cytochrome b560 composed of SDHC and SDHD.

The protein localises to the mitochondrion inner membrane. It participates in carbohydrate metabolism; tricarboxylic acid cycle. Its function is as follows. Membrane-anchoring subunit of succinate dehydrogenase (SDH) that is involved in complex II of the mitochondrial electron transport chain and is responsible for transferring electrons from succinate to ubiquinone (coenzyme Q). SDH also oxidizes malate to the non-canonical enol form of oxaloacetate, enol-oxaloacetate. Enol-oxaloacetate, which is a potent inhibitor of the succinate dehydrogenase activity, is further isomerized into keto-oxaloacetate. This is Succinate dehydrogenase [ubiquinone] cytochrome b small subunit B, mitochondrial (sdhd-b) from Xenopus laevis (African clawed frog).